Reading from the N-terminus, the 176-residue chain is Inner membrane-spanning protein YciB (176 aa).

The next 6 membrane-spanning stretches (helical) occupy residues 3–23 (FLFDLFPIILFFAAFKVWGIF), 24–44 (TATAVAIVATLAQVAWVAFRH), 49–69 (TMLWVSLGVIVVFGGATLVLH), 81–101 (LYWLFAIGLLAARYAFGNNLI), 121–141 (VAWALFFAVLGVANLYVVHNF), and 149–169 (FKLFGTTGAMVVFIILQSLWL).

Belongs to the YciB family.

The protein resides in the cell inner membrane. Its function is as follows. Plays a role in cell envelope biogenesis, maintenance of cell envelope integrity and membrane homeostasis. The polypeptide is Inner membrane-spanning protein YciB (Burkholderia lata (strain ATCC 17760 / DSM 23089 / LMG 22485 / NCIMB 9086 / R18194 / 383)).